The sequence spans 268 residues: Tetratricopeptide repeat protein 33 (268 aa).

Residues 14–34 (VSKQTVQQFEQDSEQADEDEV) are disordered. The span at 24–34 (QDSEQADEDEV) shows a compositional bias: acidic residues. 3 TPR repeats span residues 60-93 (SKRL…TPED), 94-127 (AVLY…RPIW), and 128-161 (WEAW…HPSE). A disordered region spans residues 249 to 268 (EGDDNPTSSSQSVLIKARGL).

The polypeptide is Tetratricopeptide repeat protein 33 (ttc33) (Danio rerio (Zebrafish)).